A 221-amino-acid polypeptide reads, in one-letter code: Eukaryotic translation initiation factor NCBP (221 aa).

Belongs to the eukaryotic initiation factor 4E family. In terms of assembly, EIF4F is a multi-subunit complex, the composition of which varies with external and internal environmental conditions. It is composed of at least EIF4A, EIF4E and EIF4G. EIF4E is also known to interact with other partners. In higher plants two isoforms of EIF4F have been identified, named isoform EIF4F and isoform EIF(iso)4F. Isoform EIF4F has subunits p220 and p26, whereas isoform EIF(iso)4F has subunits p82 and p28.

Recognizes and binds the 7-methylguanosine-containing mRNA cap during an early step in the initiation of protein synthesis and facilitates ribosome binding by inducing the unwinding of the mRNAs secondary structures. The polypeptide is Eukaryotic translation initiation factor NCBP (NCBP) (Arabidopsis thaliana (Mouse-ear cress)).